The chain runs to 235 residues: NADH-quinone oxidoreductase subunit B 2 (235 aa).

The span at 1–14 (MGLTSRPTPASRQP) shows a compositional bias: low complexity. The disordered stretch occupies residues 1 to 24 (MGLTSRPTPASRQPASPPPADPVL). 4 residues coordinate [4Fe-4S] cluster: C63, C64, C129, and C159. Positions 188 to 235 (TGATGGGPSTDALRSGLVAAPTAPGPTAPASTAPGPTAPAPTQDEERR) are disordered.

The protein belongs to the complex I 20 kDa subunit family. In terms of assembly, NDH-1 is composed of 14 different subunits. Subunits NuoB, C, D, E, F, and G constitute the peripheral sector of the complex. [4Fe-4S] cluster serves as cofactor.

It localises to the cell membrane. The catalysed reaction is a quinone + NADH + 5 H(+)(in) = a quinol + NAD(+) + 4 H(+)(out). Its function is as follows. NDH-1 shuttles electrons from NADH, via FMN and iron-sulfur (Fe-S) centers, to quinones in the respiratory chain. The immediate electron acceptor for the enzyme in this species is believed to be a menaquinone. Couples the redox reaction to proton translocation (for every two electrons transferred, four hydrogen ions are translocated across the cytoplasmic membrane), and thus conserves the redox energy in a proton gradient. The protein is NADH-quinone oxidoreductase subunit B 2 of Streptomyces griseus subsp. griseus (strain JCM 4626 / CBS 651.72 / NBRC 13350 / KCC S-0626 / ISP 5235).